A 114-amino-acid chain; its full sequence is Superoxide dismutase [Cu-Zn] (114 aa).

The Cu cation site is built by histidine 37, histidine 39, and histidine 54. Residues 48-68 form a disordered region; that stretch reads CMSSGPHFNPRNKEHGAPTDE. Residues histidine 54, histidine 62, histidine 71, and aspartate 74 each coordinate Zn(2+). Residues 58–68 are compositionally biased toward basic and acidic residues; it reads RNKEHGAPTDE. Histidine 111 is a Cu cation binding site.

This sequence belongs to the Cu-Zn superoxide dismutase family. As to quaternary structure, homodimer. The cofactor is Cu cation. Zn(2+) is required as a cofactor.

The protein localises to the cytoplasm. It catalyses the reaction 2 superoxide + 2 H(+) = H2O2 + O2. Destroys radicals which are normally produced within the cells and which are toxic to biological systems. The sequence is that of Superoxide dismutase [Cu-Zn] from Drosophila miranda (Fruit fly).